The following is a 389-amino-acid chain: Putative F-box protein At1g47790 (389 aa).

The F-box domain occupies 19 to 65; that stretch reads SKPTSSFPLDLASEILLRLPVKSVVRFRCVSKLWSSIITDPYFIKTY.

In Arabidopsis thaliana (Mouse-ear cress), this protein is Putative F-box protein At1g47790.